Reading from the N-terminus, the 503-residue chain is MQYRDLRDFLAQLERTGELRRVHQPVSPRLEMTEVCDRLLRSEGPAVVFAQPVDGAQKYDMPVLANLFGTTRRVALGMGAESLDELRDIGRLLSALKEPEPPRGLREAGKLWTMAKAVWDMAPRKVSSPACQEIVWEGNDVDLSRIPVQTCWPGDAAPLVTWGLVITRGPHKKRQNLGIYRQQVINRNQVIMRWLAHRGGALDFREHAIANPGQPFPIAVALGADPATILGAVTPVPDTLSEYQFAGLLRGSRTELATCLTPSLAQAQLQVPAGAEIILEGHIQPDPTHPSGYQHALEGPFGDHTGYYNEQDWFPVFTVERITMRRDPIYHSTYTGKPPDEPAVLGVALNEVFVPLLQKQFPEIADFYLPPEGCSYRMALVSMKKQYAGHAKRVMFGVWSFLRQFMYTKFIVVVDDDVNLRDWKEVIWAITTRVDPARDTVMVENTPIDYLDFASPVSGLGSKMGIDATNKWPGETTREWGQPIVMDTAVKAKVDAMWDTLFQ.

Mn(2+) is bound at residue N176. Prenylated FMN contacts are provided by residues 179 to 181 (IYR), 193 to 195 (RWL), and 198 to 199 (RG). Residue E242 participates in Mn(2+) binding. Residue D303 is the Proton donor of the active site.

It belongs to the UbiD family. As to quaternary structure, homohexamer. The cofactor is prenylated FMN. Mn(2+) serves as cofactor.

Its subcellular location is the cell membrane. The enzyme catalyses a 4-hydroxy-3-(all-trans-polyprenyl)benzoate + H(+) = a 2-(all-trans-polyprenyl)phenol + CO2. It functions in the pathway cofactor biosynthesis; ubiquinone biosynthesis. Catalyzes the decarboxylation of 3-octaprenyl-4-hydroxy benzoate to 2-octaprenylphenol, an intermediate step in ubiquinone biosynthesis. The sequence is that of 3-octaprenyl-4-hydroxybenzoate carboxy-lyase from Ralstonia pickettii (strain 12J).